Reading from the N-terminus, the 127-residue chain is uncharacterized protein (127 aa).

The next 2 helical transmembrane spans lie at 48–68 and 83–103; these read LYSL…PLSI and VFLF…CLID.

It is found in the membrane. This is an uncharacterized protein from Saccharomyces cerevisiae (strain ATCC 204508 / S288c) (Baker's yeast).